Consider the following 86-residue polypeptide: MGFSELFTNADGRLSTTASIQFWGFVAATGVLLYSVYLDKPYVPEMFSTFLFACVGTAATKGVANALSQRREQGKEQGREQGREQE.

The next 2 membrane-spanning stretches (helical) occupy residues 20 to 38 (IQFW…SVYL) and 47 to 63 (FSTF…TKGV). A disordered region spans residues 67–86 (LSQRREQGKEQGREQGREQE). Residues 69-86 (QRREQGKEQGREQGREQE) show a composition bias toward basic and acidic residues.

The protein localises to the cell membrane. This is an uncharacterized protein from Haemophilus influenzae (strain ATCC 51907 / DSM 11121 / KW20 / Rd).